The following is an 871-amino-acid chain: uncharacterized protein (871 aa).

Transmembrane regions (helical) follow at residues 11 to 31 (AFVS…GLFL), 92 to 112 (YLFT…PILL), 139 to 159 (FYAH…IIYR), 380 to 400 (TILT…GCIS), 422 to 442 (LLGI…MSLV), 475 to 495 (VQVF…VQVI), 520 to 540 (FLLQ…TLLL), 562 to 582 (LSAP…TIMI), 586 to 606 (IIAP…YFAY), 629 to 649 (LFQV…LFVL), and 653 to 673 (WGAT…HLYF). 6 positions are modified to phosphoserine: S725, S726, S727, S729, S737, and S761. Over residues 727–740 (SGSDEFLETSSRTS) the composition is skewed to polar residues. Positions 727-746 (SGSDEFLETSSRTSENTKEK) are disordered.

Belongs to the CSC1 (TC 1.A.17) family.

It is found in the golgi apparatus membrane. Acts as an osmosensitive calcium-permeable cation channel. This is an uncharacterized protein from Schizosaccharomyces pombe (strain 972 / ATCC 24843) (Fission yeast).